The sequence spans 130 residues: Small ribosomal subunit protein uS9 (130 aa).

Residues 109-130 (RAKERKKYGLYGARRSPQFTKR) are disordered.

Belongs to the universal ribosomal protein uS9 family.

This chain is Small ribosomal subunit protein uS9, found in Malacoplasma penetrans (strain HF-2) (Mycoplasma penetrans).